We begin with the raw amino-acid sequence, 280 residues long: MRPVIKVGLSTASVYPLRAEAAFEYAAKLGYDGVELMVWGESVSQDIDAVKGLSRRYRVPVLSVHAPCLLISQRVWGANPVPKLERSVRAAEQLGAQTVVVHPPFRWQRRYAEGFSDQVAELEAASDVMIAVENMFPFRADRFFGADQSRERMRKRGGGPGPAISVFAPSFDPLAGNHAHYTLDLSHTATAGSDSLEMVRRMGSGLVHLHLCDGSGLPADEHLVPGRGTQPTAAVCQLLAGADFAGHVVLEVSTSSVRSATERETMLTESLQFARTYLLR.

The N-terminal stretch at 1 to 21 (MRPVIKVGLSTASVYPLRAEA) is a signal peptide.

To M.tuberculosis Rv0498 and S.coelicolor SCO3347.

This is an uncharacterized protein from Mycobacterium leprae (strain TN).